A 507-amino-acid polypeptide reads, in one-letter code: Xylose import ATP-binding protein XylG (507 aa).

ABC transporter domains follow at residues 5–242 (LKMT…VGRE) and 259–504 (LEVK…LSEK). Residue 37–44 (GENGSGKS) participates in ATP binding.

It belongs to the ABC transporter superfamily. Xylose importer (TC 3.A.1.2.4) family. As to quaternary structure, the complex is composed of two ATP-binding proteins (XylG), two transmembrane proteins (XylH) and a solute-binding protein (XylF).

The protein localises to the cell inner membrane. It catalyses the reaction D-xylose(out) + ATP + H2O = D-xylose(in) + ADP + phosphate + H(+). Part of the ABC transporter complex XylFGH involved in xylose import. Responsible for energy coupling to the transport system. The chain is Xylose import ATP-binding protein XylG from Photobacterium profundum (strain SS9).